We begin with the raw amino-acid sequence, 124 residues long: Succinate dehydrogenase cytochrome b556 subunit (124 aa).

Residues 1-29 lie on the Cytoplasmic side of the membrane; that stretch reads MTKTKQEIYNKRPTSPHLTIYKPQISSTL. Residues 30–55 traverse the membrane as a helical segment; sequence SILYRMTGVALFFAVSILVWWLILSK. Residues 56–67 lie on the Periplasmic side of the membrane; sequence YDNNYLQLAECC. Residues 68-88 traverse the membrane as a helical segment; it reads IIKICLVAVSYAWFYHLCNGI. His-83 provides a ligand contact to heme. Residues 89 to 103 lie on the Cytoplasmic side of the membrane; that stretch reads RHLFWDIGYGFSIKL. Residues 104 to 124 traverse the membrane as a helical segment; the sequence is VNITGWCVVVGSVLLTVLLWV.

Belongs to the cytochrome b560 family. As to quaternary structure, part of an enzyme complex containing four subunits: a flavoprotein, an iron-sulfur protein, plus two membrane-anchoring proteins, SdhC and SdhD. The complex can form homotrimers. Heme serves as cofactor.

It is found in the cell inner membrane. Its pathway is carbohydrate metabolism; tricarboxylic acid cycle. Its function is as follows. Membrane-anchoring subunit of succinate dehydrogenase (SDH). The chain is Succinate dehydrogenase cytochrome b556 subunit (sdhC) from Rickettsia conorii (strain ATCC VR-613 / Malish 7).